Reading from the N-terminus, the 216-residue chain is Large ribosomal subunit protein uL3 (216 aa).

Residues 119–143 (GYQGNIHKDGQSRGPMAHGSRYHRR) are disordered.

This sequence belongs to the universal ribosomal protein uL3 family. Part of the 50S ribosomal subunit. Forms a cluster with proteins L14 and L19.

One of the primary rRNA binding proteins, it binds directly near the 3'-end of the 23S rRNA, where it nucleates assembly of the 50S subunit. The protein is Large ribosomal subunit protein uL3 of Levilactobacillus brevis (strain ATCC 367 / BCRC 12310 / CIP 105137 / JCM 1170 / LMG 11437 / NCIMB 947 / NCTC 947) (Lactobacillus brevis).